A 332-amino-acid polypeptide reads, in one-letter code: Glycerol-3-phosphate dehydrogenase [NAD(P)+] (332 aa).

4 residues coordinate NADPH: Ser-11, Phe-12, Lys-32, and Lys-106. The sn-glycerol 3-phosphate site is built by Lys-106, Gly-137, and Ser-139. Residue Ala-141 participates in NADPH binding. Sn-glycerol 3-phosphate contacts are provided by Lys-192, Asp-245, Ser-255, Arg-256, and Asn-257. Lys-192 functions as the Proton acceptor in the catalytic mechanism. Arg-256 serves as a coordination point for NADPH. Residues Val-280 and Glu-282 each coordinate NADPH.

It belongs to the NAD-dependent glycerol-3-phosphate dehydrogenase family.

The protein localises to the cytoplasm. It carries out the reaction sn-glycerol 3-phosphate + NAD(+) = dihydroxyacetone phosphate + NADH + H(+). It catalyses the reaction sn-glycerol 3-phosphate + NADP(+) = dihydroxyacetone phosphate + NADPH + H(+). Its pathway is membrane lipid metabolism; glycerophospholipid metabolism. Catalyzes the reduction of the glycolytic intermediate dihydroxyacetone phosphate (DHAP) to sn-glycerol 3-phosphate (G3P), the key precursor for phospholipid synthesis. This Staphylococcus epidermidis (strain ATCC 35984 / DSM 28319 / BCRC 17069 / CCUG 31568 / BM 3577 / RP62A) protein is Glycerol-3-phosphate dehydrogenase [NAD(P)+].